The primary structure comprises 119 residues: Ribosome-binding factor A (119 aa).

It belongs to the RbfA family. In terms of assembly, monomer. Binds 30S ribosomal subunits, but not 50S ribosomal subunits or 70S ribosomes.

It localises to the cytoplasm. Functionally, one of several proteins that assist in the late maturation steps of the functional core of the 30S ribosomal subunit. Associates with free 30S ribosomal subunits (but not with 30S subunits that are part of 70S ribosomes or polysomes). Required for efficient processing of 16S rRNA. May interact with the 5'-terminal helix region of 16S rRNA. The chain is Ribosome-binding factor A from Chlorobium luteolum (strain DSM 273 / BCRC 81028 / 2530) (Pelodictyon luteolum).